The sequence spans 498 residues: Type VI secretion system sheath protein TssC1 (498 aa).

Forms a heterodimer with TssB1. Heterodimers assemble to form the sheath of the T6SS machinery. Interacts with TssA1.

Functionally, core component of the H1 type VI (H1-T6SS) secretion system that plays a role in the release of toxins targeting both eukaryotic and prokaryotic species. Forms the sheath of the structure by assembling into tubules together with TssB1 resulting in the stacking of cogwheel-like structures showing predominantly a 12-fold symmetry. The sheath contracts to provide the energy needed for effector delivery. The protein is Type VI secretion system sheath protein TssC1 of Pseudomonas aeruginosa (strain ATCC 15692 / DSM 22644 / CIP 104116 / JCM 14847 / LMG 12228 / 1C / PRS 101 / PAO1).